Consider the following 521-residue polypeptide: Probable glycogen synthase (521 aa).

The protein belongs to the glycosyltransferase 1 family. Bacterial/plant glycogen synthase subfamily.

It carries out the reaction [(1-&gt;4)-alpha-D-glucosyl](n) + ADP-alpha-D-glucose = [(1-&gt;4)-alpha-D-glucosyl](n+1) + ADP + H(+). Its pathway is glycan biosynthesis; glycogen biosynthesis. In terms of biological role, synthesizes alpha-1,4-glucan chains using ADP-glucose. The polypeptide is Probable glycogen synthase (glgA) (Methanocaldococcus jannaschii (strain ATCC 43067 / DSM 2661 / JAL-1 / JCM 10045 / NBRC 100440) (Methanococcus jannaschii)).